A 239-amino-acid polypeptide reads, in one-letter code: Urease accessory protein UreE (239 aa).

The tract at residues 185 to 239 (VASPLDEPHGSGLHIHGIHSHGDGHSHSHDSHSHSHDSDHGHSHSHGDHDHDHKH) is disordered. Basic and acidic residues predominate over residues 204–239 (SHGDGHSHSHDSHSHSHDSDHGHSHSHGDHDHDHKH).

This sequence belongs to the UreE family.

The protein resides in the cytoplasm. Involved in urease metallocenter assembly. Binds nickel. Probably functions as a nickel donor during metallocenter assembly. The chain is Urease accessory protein UreE from Yersinia frederiksenii.